The sequence spans 85 residues: U4-theraphotoxin-Hhn1l (85 aa).

Positions 1–22 (MKVTLIAFLTCAAVLVLHTTAA) are cleaved as a signal peptide. Residues 23–48 (EELEAESQLMGVGMPDTELAAVDEER) constitute a propeptide that is removed on maturation. 3 disulfide bridges follow: C52/C66, C56/C77, and C71/C82.

This sequence belongs to the neurotoxin 12 (Hwtx-2) family. 02 (Hwtx-2) subfamily. Expressed by the venom gland.

The protein resides in the secreted. Functionally, postsynaptic neurotoxin. The sequence is that of U4-theraphotoxin-Hhn1l from Cyriopagopus hainanus (Chinese bird spider).